The sequence spans 677 residues: Multicopper oxidase GIP1 (677 aa).

The signal sequence occupies residues 1–23; it reads MLTSPRLILLLLAWVFSALVASA. Plastocyanin-like domains follow at residues 31–150 and 179–379; these read ITWE…IRRK and LVMV…RYKG. The N-linked (GlcNAc...) asparagine glycan is linked to asparagine 76. Positions 80, 82, 130, and 132 each coordinate Cu cation. Asparagine 228, asparagine 283, asparagine 396, and asparagine 478 each carry an N-linked (GlcNAc...) asparagine glycan. Residues 469–588 enclose the Plastocyanin-like 3 domain; the sequence is DEGLVIRTKN…AGGMAIAILD (120 aa). Residue histidine 503 participates in Cu cation binding. Asparagine 520 carries an N-linked (GlcNAc...) asparagine glycan. Residues 629 to 651 are disordered; it reads PLLAVSPSGGPKKDSGETSASDS.

This sequence belongs to the multicopper oxidase family. In terms of assembly, might be part of an extracellular enzyme complex composed of GIP1, aurF, aurO and aurS.

It is found in the secreted. Its subcellular location is the extracellular space. The protein operates within pigment biosynthesis. Functionally, multicopper oxidase; part of the gene cluster that mediates the biosynthesis of aurofusarin, a red mycelium pigment which is acting as a mycotoxin. The first step is performed by the polyketide synthase which condenses one acetyl-CoA and 6 malonyl-CoA units to form the first intermediate, the cyclic heptaketide and yellow pigment YWA1. The C2 hydroxyl group in the pyrone ring of YWA1 is probably formed during ring closure by an aldol-type cyclization reaction. The dehydratase aurZ then acts as the first tailoring enzyme in the aurofusarin biosynthetic pathway by converting YWA1 to nor-rubrofusarin. Nor-rubrofusarin is then methylated to rubrofusarin by the O-methyltransferase aurJ. Rubrofusarin is then transported across the plasma membrane by the rubrofusarin-specific pump aurT for further enzymatic processing by the extracellular complex composed of GIP1, aurF, aurO and aurS to yield aurofusarin. In Gibberella zeae (strain ATCC MYA-4620 / CBS 123657 / FGSC 9075 / NRRL 31084 / PH-1) (Wheat head blight fungus), this protein is Multicopper oxidase GIP1.